Consider the following 303-residue polypeptide: Oxygen-dependent coproporphyrinogen-III oxidase (303 aa).

Ser93 is a substrate binding site. 2 residues coordinate a divalent metal cation: His97 and His107. The Proton donor role is filled by His107. 109 to 111 (NVR) serves as a coordination point for substrate. His146 and His176 together coordinate a divalent metal cation. The segment at 241-276 (YVEFNLVYDRGTLFGLQSGGRTESILMSLPPQVRWG) is important for dimerization. 259-261 (GGR) is a substrate binding site.

The protein belongs to the aerobic coproporphyrinogen-III oxidase family. Homodimer. A divalent metal cation is required as a cofactor.

The protein localises to the cytoplasm. It carries out the reaction coproporphyrinogen III + O2 + 2 H(+) = protoporphyrinogen IX + 2 CO2 + 2 H2O. The protein operates within porphyrin-containing compound metabolism; protoporphyrin-IX biosynthesis; protoporphyrinogen-IX from coproporphyrinogen-III (O2 route): step 1/1. Its function is as follows. Involved in the heme biosynthesis. Catalyzes the aerobic oxidative decarboxylation of propionate groups of rings A and B of coproporphyrinogen-III to yield the vinyl groups in protoporphyrinogen-IX. In Pseudomonas putida (strain W619), this protein is Oxygen-dependent coproporphyrinogen-III oxidase.